The primary structure comprises 226 residues: Cytidylate kinase (226 aa).

10-18 (GPAGAGKST) contacts ATP.

The protein belongs to the cytidylate kinase family. Type 1 subfamily.

The protein localises to the cytoplasm. The enzyme catalyses CMP + ATP = CDP + ADP. It carries out the reaction dCMP + ATP = dCDP + ADP. This Caldicellulosiruptor bescii (strain ATCC BAA-1888 / DSM 6725 / KCTC 15123 / Z-1320) (Anaerocellum thermophilum) protein is Cytidylate kinase.